We begin with the raw amino-acid sequence, 213 residues long: Uridine kinase (213 aa).

15-22 is a binding site for ATP; the sequence is GASASGKS.

Belongs to the uridine kinase family.

Its subcellular location is the cytoplasm. It carries out the reaction uridine + ATP = UMP + ADP + H(+). The catalysed reaction is cytidine + ATP = CMP + ADP + H(+). The protein operates within pyrimidine metabolism; CTP biosynthesis via salvage pathway; CTP from cytidine: step 1/3. Its pathway is pyrimidine metabolism; UMP biosynthesis via salvage pathway; UMP from uridine: step 1/1. The sequence is that of Uridine kinase from Escherichia fergusonii (strain ATCC 35469 / DSM 13698 / CCUG 18766 / IAM 14443 / JCM 21226 / LMG 7866 / NBRC 102419 / NCTC 12128 / CDC 0568-73).